A 318-amino-acid polypeptide reads, in one-letter code: Protein teg (318 aa).

The 176-residue stretch at Ile7 to Ile182 folds into the PNPLA domain. A GXGXXG motif is present at residues Gly11–Gly16. A GXSXG motif is present at residues Gly42–Gly46. Residue Ser44 is the Nucleophile of the active site. Catalysis depends on Asp169, which acts as the Proton acceptor.

Functionally, probable lipid hydrolase. The sequence is that of Protein teg (teg) from Priestia megaterium (strain ATCC 14581 / DSM 32 / CCUG 1817 / JCM 2506 / NBRC 15308 / NCIMB 9376 / NCTC 10342 / NRRL B-14308 / VKM B-512 / Ford 19) (Bacillus megaterium).